We begin with the raw amino-acid sequence, 24 residues long: Transaldolase (24 aa).

The protein belongs to the transaldolase family.

The protein localises to the cytoplasm. It catalyses the reaction D-sedoheptulose 7-phosphate + D-glyceraldehyde 3-phosphate = D-erythrose 4-phosphate + beta-D-fructose 6-phosphate. Its pathway is carbohydrate degradation; pentose phosphate pathway; D-glyceraldehyde 3-phosphate and beta-D-fructose 6-phosphate from D-ribose 5-phosphate and D-xylulose 5-phosphate (non-oxidative stage): step 2/3. Transaldolase is important for the balance of metabolites in the pentose-phosphate pathway. This is Transaldolase from Capsicum annuum var. annuum (Red pepper).